The chain runs to 231 residues: Uridylate kinase (231 aa).

9-12 (KLSG) serves as a coordination point for ATP. Gly49 is a binding site for UMP. ATP-binding residues include Gly50 and Arg54. Residues Asp69 and 130–137 (AGMPYFST) each bind UMP. The ATP site is built by Asn158, Tyr164, and Asp167.

This sequence belongs to the UMP kinase family. As to quaternary structure, homohexamer.

It is found in the cytoplasm. The catalysed reaction is UMP + ATP = UDP + ADP. The protein operates within pyrimidine metabolism; CTP biosynthesis via de novo pathway; UDP from UMP (UMPK route): step 1/1. With respect to regulation, inhibited by UTP. Its function is as follows. Catalyzes the reversible phosphorylation of UMP to UDP. The chain is Uridylate kinase from Tropheryma whipplei (strain Twist) (Whipple's bacillus).